The chain runs to 212 residues: 3-isopropylmalate dehydratase small subunit (212 aa).

This sequence belongs to the LeuD family. LeuD type 1 subfamily. Heterodimer of LeuC and LeuD.

The enzyme catalyses (2R,3S)-3-isopropylmalate = (2S)-2-isopropylmalate. The protein operates within amino-acid biosynthesis; L-leucine biosynthesis; L-leucine from 3-methyl-2-oxobutanoate: step 2/4. Its function is as follows. Catalyzes the isomerization between 2-isopropylmalate and 3-isopropylmalate, via the formation of 2-isopropylmaleate. This chain is 3-isopropylmalate dehydratase small subunit, found in Thioalkalivibrio sulfidiphilus (strain HL-EbGR7).